The following is a 435-amino-acid chain: Ras association domain-containing protein 9 (435 aa).

The disordered stretch occupies residues 1-22 (MAPFGRNLLKTRHKNRSPTKDM). Positions 25–119 (EEKEIVVWVC…MQFVLVKADA (95 aa)) constitute a Ras-associating domain. A coiled-coil region spans residues 195-290 (HTIHQQVKRM…DKLSAEIEKE (96 aa)). Residues 380-435 (NRAKESEVPSSNGEIPPFTQRVFSNYTNDTDSDTGISSNHSQDSETTVGDVVLLST) are disordered. Positions 400 to 426 (RVFSNYTNDTDSDTGISSNHSQDSETT) are enriched in polar residues.

As to quaternary structure, interacts with PAM.

It is found in the endosome. May play a role in regulating vesicuar trafficking in cells. The polypeptide is Ras association domain-containing protein 9 (RASSF9) (Homo sapiens (Human)).